Consider the following 121-residue polypeptide: Small ribosomal subunit protein uS13 (121 aa).

The disordered stretch occupies residues 93–121; that stretch reads RGLPVRGQNTKNNARTRKGPRRTVANKKK. Over residues 106 to 121 the composition is skewed to basic residues; the sequence is ARTRKGPRRTVANKKK.

It belongs to the universal ribosomal protein uS13 family. Part of the 30S ribosomal subunit. Forms a loose heterodimer with protein S19. Forms two bridges to the 50S subunit in the 70S ribosome.

Functionally, located at the top of the head of the 30S subunit, it contacts several helices of the 16S rRNA. In the 70S ribosome it contacts the 23S rRNA (bridge B1a) and protein L5 of the 50S subunit (bridge B1b), connecting the 2 subunits; these bridges are implicated in subunit movement. Contacts the tRNAs in the A and P-sites. The polypeptide is Small ribosomal subunit protein uS13 (Bacillus pumilus (strain SAFR-032)).